Consider the following 999-residue polypeptide: Collagen alpha-1(I) chain (999 aa).

Residues S1–P999 are disordered. Position 7 is an allysine (K7). Phosphoserine is present on S8. 4-hydroxyproline occurs at positions 27, 30, 33, 42, 45, 48, 62, 77, 83, 92, and 98. Over residues N65 to E79 the composition is skewed to basic and acidic residues. K101 is modified (5-hydroxylysine; alternate). An O-linked (Gal...) hydroxylysine; alternate glycan is attached at K101. Residue S107 is modified to Phosphoserine. A compositionally biased stretch (low complexity) spans D115–N131. Residues P125, P128, P134, P143, P149, P170, P179, P182, P209, P212, P224, P230, P239, P245, P248, and P263 each carry the 4-hydroxyproline modification. A compositionally biased stretch (low complexity) spans P149–A167. Over residues P169–F181 the composition is skewed to pro residues. Low complexity predominate over residues A215 to S254. Position 266 is a 5-hydroxylysine (K266). 4-hydroxyproline is present on residues P272, P275, P287, P296, P311, P317, P326, and P332. Residues G321–G330 show a composition bias toward gly residues. At K341 the chain carries 5-hydroxylysine. 4-hydroxyproline is present on residues P350, P359, P365, P371, P380, P383, P392, P401, P407, P419, P429, P432, P450, P468, P474, P480, P486, P492, P498, P510, P526, P532, P538, and P547. Residues K374 to R400 are compositionally biased toward low complexity. Residues Q462–Q489 show a composition bias toward low complexity. The span at A522–Q535 shows a compositional bias: low complexity. K559 carries the 5-hydroxylysine modification. P565, P580, and P586 each carry 4-hydroxyproline. The segment covering S592–A606 has biased composition (low complexity). S595 bears the Phosphoserine mark. 8 positions are modified to 4-hydroxyproline: P607, P613, P616, P625, P631, P649, P658, and P667. A compositionally biased stretch (low complexity) spans A619 to A646. A compositionally biased stretch (pro residues) spans P648–P660. Residue K670 is modified to 5-hydroxylysine. Low complexity predominate over residues S675 to V691. 2 positions are modified to 4-hydroxyproline: P679 and P685. At P693 the chain carries 3-hydroxyproline. P694, P703, P706, P727, P736, P745, P754, P772, P781, P784, P790, P805, P811, P817, P826, and P832 each carry 4-hydroxyproline. The segment covering E720–E729 has biased composition (low complexity). Positions S739–P754 are enriched in low complexity. The segment covering P804 to A814 has biased composition (pro residues). Low complexity predominate over residues P816–S831. Residue K841 is modified to 5-hydroxylysine. Over residues P849 to V864 the composition is skewed to pro residues. P852, P855, and P858 each carry 4-hydroxyproline. Residues A885–P899 show a composition bias toward low complexity. Basic and acidic residues predominate over residues R900–I914. A 5-hydroxylysine modification is found at K903. K915 is modified (5-hydroxylysine; alternate). K915 is a glycosylation site (O-linked (Gal...) hydroxylysine; alternate). P930, P933, P951, and P966 each carry 4-hydroxyproline. Residues P933 to P966 show a composition bias toward low complexity. 3-hydroxyproline is present on P971. At P972 the chain carries 4-hydroxyproline. Pro residues predominate over residues V984–P999. A 3-hydroxyproline modification is found at P986. Position 987 is a 4-hydroxyproline (P987). A 3-hydroxyproline modification is found at P989. Residue P990 is modified to 4-hydroxyproline. The residue at position 992 (P992) is a 3-hydroxyproline. A 4-hydroxyproline mark is found at P993, P996, and P999.

Belongs to the fibrillar collagen family. Trimers of one alpha 2(I) and two alpha 1(I) chains. Contains mostly 4-hydroxyproline. Proline residues at the third position of the tripeptide repeating unit (G-X-Y) are hydroxylated in some or all of the chains. Post-translationally, contains 3-hydroxyproline at a few sites. This modification occurs on the first proline residue in the sequence motif Gly-Pro-Hyp, where Hyp is 4-hydroxyproline. In terms of processing, lysine residues at the third position of the tripeptide repeating unit (G-X-Y) are 5-hydroxylated in some or all of the chains. O-glycosylated on hydroxylated lysine residues. The O-linked glycan consists of a Glc-Gal disaccharide. Expressed in bones.

Its subcellular location is the secreted. The protein resides in the extracellular space. It localises to the extracellular matrix. Type I collagen is a member of group I collagen (fibrillar forming collagen). The chain is Collagen alpha-1(I) chain from Choloepus hoffmanni (Hoffmann's two-fingered sloth).